The sequence spans 509 residues: Sperm-associated antigen 6 (509 aa).

8 ARM repeats span residues 31–70 (PQNI…RLAN), 73–112 (DDLA…AVGK), 115–154 (PQLA…YIAR), 157–196 (AELS…DIAK), 199–238 (PELA…QVSK), 241–280 (VDLA…EIAK), 325–365 (ENLA…QIGR), and 368–409 (PEHA…NILQ).

As to quaternary structure, interacts with SPAG16 and SPAG17. As to expression, highly expressed in testis.

It is found in the cytoplasm. It localises to the cytoskeleton. The protein localises to the cell projection. Its subcellular location is the cilium. The protein resides in the flagellum. It is found in the cilium axoneme. In terms of biological role, important for structural integrity of the central apparatus in the sperm tail and for flagellar motility. The polypeptide is Sperm-associated antigen 6 (SPAG6) (Homo sapiens (Human)).